Consider the following 333-residue polypeptide: Tetraacyldisaccharide 4'-kinase (333 aa).

55–62 (TIGGNGKT) provides a ligand contact to ATP.

This sequence belongs to the LpxK family.

The enzyme catalyses a lipid A disaccharide + ATP = a lipid IVA + ADP + H(+). It functions in the pathway glycolipid biosynthesis; lipid IV(A) biosynthesis; lipid IV(A) from (3R)-3-hydroxytetradecanoyl-[acyl-carrier-protein] and UDP-N-acetyl-alpha-D-glucosamine: step 6/6. In terms of biological role, transfers the gamma-phosphate of ATP to the 4'-position of a tetraacyldisaccharide 1-phosphate intermediate (termed DS-1-P) to form tetraacyldisaccharide 1,4'-bis-phosphate (lipid IVA). The polypeptide is Tetraacyldisaccharide 4'-kinase (Blochmanniella floridana).